Consider the following 117-residue polypeptide: Large ribosomal subunit protein uL18 (117 aa).

It belongs to the universal ribosomal protein uL18 family. As to quaternary structure, part of the 50S ribosomal subunit; part of the 5S rRNA/L5/L18/L25 subcomplex. Contacts the 5S and 23S rRNAs.

Its function is as follows. This is one of the proteins that bind and probably mediate the attachment of the 5S RNA into the large ribosomal subunit, where it forms part of the central protuberance. The protein is Large ribosomal subunit protein uL18 of Blochmanniella pennsylvanica (strain BPEN).